A 420-amino-acid polypeptide reads, in one-letter code: UDP-N-acetylglucosamine 1-carboxyvinyltransferase (420 aa).

22–23 contacts phosphoenolpyruvate; the sequence is KN. R93 is a binding site for UDP-N-acetyl-alpha-D-glucosamine. Catalysis depends on C117, which acts as the Proton donor. The residue at position 117 (C117) is a 2-(S-cysteinyl)pyruvic acid O-phosphothioketal. 2 residues coordinate UDP-N-acetyl-alpha-D-glucosamine: D307 and V329.

The protein belongs to the EPSP synthase family. MurA subfamily.

The protein localises to the cytoplasm. The catalysed reaction is phosphoenolpyruvate + UDP-N-acetyl-alpha-D-glucosamine = UDP-N-acetyl-3-O-(1-carboxyvinyl)-alpha-D-glucosamine + phosphate. The protein operates within cell wall biogenesis; peptidoglycan biosynthesis. Cell wall formation. Adds enolpyruvyl to UDP-N-acetylglucosamine. The polypeptide is UDP-N-acetylglucosamine 1-carboxyvinyltransferase (Marinobacter nauticus (strain ATCC 700491 / DSM 11845 / VT8) (Marinobacter aquaeolei)).